The primary structure comprises 215 residues: Nucleoredoxin-like protein 1 (215 aa).

A Thioredoxin; atypical domain is found at 1-164 (MVDLFLGKVL…GAELIDRNFM (164 aa)). Residues 190 to 215 (DEKKKKKKRDDDDDDDDGGGGGGPWG) are disordered.

The protein belongs to the nucleoredoxin family.

The protein resides in the cell projection. Its subcellular location is the cilium. It is found in the photoreceptor outer segment. In terms of biological role, plays an important role in retinal cone photoreceptor survival. May play a role in cone cell viability, slowing down cone degeneration, does not seem to play a role in degenerating rods. This is Nucleoredoxin-like protein 1 (nxnl1) from Danio rerio (Zebrafish).